The primary structure comprises 126 residues: Aspartate 1-decarboxylase (126 aa).

The Schiff-base intermediate with substrate; via pyruvic acid role is filled by serine 25. Residue serine 25 is modified to Pyruvic acid (Ser). Threonine 57 serves as a coordination point for substrate. Tyrosine 58 serves as the catalytic Proton donor. A substrate-binding site is contributed by 73 to 75; that stretch reads GAA.

It belongs to the PanD family. In terms of assembly, heterooctamer of four alpha and four beta subunits. Pyruvate serves as cofactor. In terms of processing, is synthesized initially as an inactive proenzyme, which is activated by self-cleavage at a specific serine bond to produce a beta-subunit with a hydroxyl group at its C-terminus and an alpha-subunit with a pyruvoyl group at its N-terminus.

It is found in the cytoplasm. The enzyme catalyses L-aspartate + H(+) = beta-alanine + CO2. It participates in cofactor biosynthesis; (R)-pantothenate biosynthesis; beta-alanine from L-aspartate: step 1/1. Functionally, catalyzes the pyruvoyl-dependent decarboxylation of aspartate to produce beta-alanine. The sequence is that of Aspartate 1-decarboxylase from Methylococcus capsulatus (strain ATCC 33009 / NCIMB 11132 / Bath).